The primary structure comprises 79 residues: Short neurotoxin 4 (79 aa).

A signal peptide spans 1–21; that stretch reads MKTLLLTLVMVTIMCLDLGYT. Cystine bridges form between cysteine 24-cysteine 41, cysteine 34-cysteine 59, and cysteine 63-cysteine 71.

This sequence belongs to the three-finger toxin family. Short-chain subfamily. Type III alpha-neurotoxin sub-subfamily. As to expression, expressed by the venom gland.

Its subcellular location is the secreted. In terms of biological role, binds with high affinity to muscle nicotinic acetylcholine receptor (nAChR) and hinders acetylcholine binding to the receptor, thereby impairing neuromuscular transmission. Causes muscle paralysis, spasms and increased respiration. The sequence is that of Short neurotoxin 4 from Pseudonaja textilis (Eastern brown snake).